The chain runs to 1624 residues: Latent-transforming growth factor beta-binding protein 4 (1624 aa).

A signal peptide spans 1-27 (MPRPGTSGRRPLLLVLLLPLFAAATSA). The segment at 125–146 (RRPRGPGGRGLLRRRPPQRAPA) is disordered. Residues 149 to 181 (APVLCPLICHNGGVCVKPDRCLCPPDFAGKFCQ) enclose the EGF-like 1 domain. Cystine bridges form between Cys153–Cys163, Cys157–Cys169, Cys171–Cys180, Cys289–Cys311, Cys298–Cys324, and Cys312–Cys327. The region spanning 287-339 (GYCFRELRGGECASPLPGLRTQEVCCRGAGLAWGVHDCQLCSERLGNSERVSA) is the TB 1 domain. Residue Asn352 is glycosylated (N-linked (GlcNAc...) asparagine). The region spanning 357–397 (DVDECATGGRCQHGECANTRGGYTCVCPDGFLLDSSRSSCI) is the EGF-like 2; calcium-binding domain. 7 disulfide bridges follow: Cys361–Cys372, Cys367–Cys381, Cys383–Cys396, Cys409–Cys431, Cys418–Cys444, Cys432–Cys447, and Cys433–Cys459. The TB 2 domain maps to 407–459 (GPCFRVLRDGGCSLPILRNITKQICCCSRVGKAWGRGCQLCPPFGSEGFREIC). A glycan (N-linked (GlcNAc...) asparagine) is linked at Asn425. Residues 474–546 (YNTRPLGQEP…PEIPESGPSS (73 aa)) form a disordered region. Over residues 487 to 500 (SLSQPRTLPATSRP) the composition is skewed to polar residues. The segment covering 508–522 (HRLEPRPEPRPDPRP) has biased composition (basic and acidic residues). In terms of domain architecture, EGF-like 3 spans 545–586 (SSGMCQRNPQVCGPGRCISRPSGYTCACDSGFRLSPQGTRCI). Cystine bridges form between Cys549–Cys561, Cys556–Cys570, Cys572–Cys585, Cys591–Cys603, Cys598–Cys612, Cys614–Cys627, Cys633–Cys645, Cys640–Cys654, Cys656–Cys669, Cys675–Cys687, Cys682–Cys696, Cys698–Cys707, Cys714–Cys726, Cys721–Cys735, Cys737–Cys750, Cys756–Cys768, Cys763–Cys777, Cys779–Cys792, Cys838–Cys851, Cys845–Cys860, Cys862–Cys876, Cys882–Cys894, Cys888–Cys903, Cys905–Cys918, Cys924–Cys935, Cys930–Cys944, Cys946–Cys959, Cys1053–Cys1065, Cys1059–Cys1074, and Cys1076–Cys1089. One can recognise an EGF-like 4; calcium-binding domain in the interval 587–628 (DVDECRRVPPPCAPGRCENSPGSFRCVCGPGFRAGPRAAECL). One can recognise an EGF-like 5; calcium-binding domain in the interval 629–670 (DVDECHRVPPPCDLGRCENTPGSFLCVCPAGYQAAPHGASCQ). The 38-residue stretch at 671-708 (DVDECTQSPGLCGRGACKNLPGSFRCVCPAGFRGSACE) folds into the EGF-like 6; calcium-binding domain. The region spanning 710 to 751 (DVDECAQEPPPCGPGRCDNTAGSFHCACPAGFRSRGPGAPCQ) is the EGF-like 7; calcium-binding domain. The 42-residue stretch at 752 to 793 (DVDECARSPPPCTYGRCENTEGSFQCVCPMGFQPNTAGSECE) folds into the EGF-like 8; calcium-binding domain. In terms of domain architecture, EGF-like 9; calcium-binding spans 834-877 (DVDECSSGAPPCGPHGHCTNTEGSFRCSCAPGYRAPSGRPGPCA). The EGF-like 10; calcium-binding domain occupies 878–919 (DVNECLEGDFCFPHGECLNTDGSFACTCAPGYRPGPRGASCL). In terms of domain architecture, EGF-like 11; calcium-binding spans 920–960 (DVDECSEEDLCQSGICTNTDGSFECICPPGHRAGPDLASCL). Residues 1049–1090 (DVDECRNRSFCGAHAVCQNLPGSFQCLCDQGYEGARDGRHCV) enclose the EGF-like 12; calcium-binding domain. N-linked (GlcNAc...) asparagine glycosylation occurs at Asn1055. Residues 1130–1179 (GRCVPPRTSAGTFPGSQPQAPASPVLPARPPPPPLPRRPSTPRQGPVGSG) are disordered. The span at 1138 to 1149 (SAGTFPGSQPQA) shows a compositional bias: polar residues. The span at 1156-1168 (PARPPPPPLPRRP) shows a compositional bias: pro residues. Residues 1181-1235 (RECYFDTAAPDACDNILARNVTWQECCCTVGEGWGSGCRIQQCPGTETAEYQSLC) form the TB 3 domain. Cystine bridges form between Cys1183–Cys1206, Cys1193–Cys1218, Cys1207–Cys1223, Cys1208–Cys1235, Cys1257–Cys1270, Cys1265–Cys1279, Cys1281–Cys1294, Cys1300–Cys1312, Cys1307–Cys1321, and Cys1323–Cys1336. Asn1200 is a glycosylation site (N-linked (GlcNAc...) asparagine). The EGF-like 13; calcium-binding domain occupies 1253 to 1295 (DVDECQLFRDQVCKSGVCVNTAPGYSCYCSNGYYYHTQRLECI). Positions 1296–1337 (DNDECADEEPACEGGRCVNTVGSYHCTCEPPLVLDGSQRRCV) constitute an EGF-like 14; calcium-binding domain. Residue Asn1339 is glycosylated (N-linked (GlcNAc...) asparagine). Residues 1349-1402 (GVCWQEVGADLVCSHPRLDRQATYTECCCLYGEAWGMDCALCPAQDSDDFEALC) enclose the TB 4 domain. Disulfide bonds link Cys1351-Cys1375, Cys1361-Cys1387, Cys1376-Cys1390, and Cys1377-Cys1402. Residues 1446 to 1458 (ALPYDPYPPPPGP) are compositionally biased toward pro residues. Positions 1446-1524 (ALPYDPYPPP…PPEGGSYAGS (79 aa)) are disordered. The span at 1501-1510 (RSRDTRRSFP) shows a compositional bias: basic and acidic residues. 2 EGF-like domains span residues 1533-1573 (EAEE…MACV) and 1574-1618 (DINE…HHCA). 6 cysteine pairs are disulfide-bonded: Cys1537-Cys1548, Cys1543-Cys1557, Cys1559-Cys1572, Cys1578-Cys1593, Cys1588-Cys1602, and Cys1604-Cys1617.

The protein belongs to the LTBP family. Forms part of the large latent transforming growth factor beta precursor complex; removal is essential for activation of complex. Interacts with LTBP1 and TGFB1. Interacts with EFEMP2; this interaction promotes fibrillar deposition of EFEMP2. Contains hydroxylated asparagine residues. Highly expressed in heart, skeletal muscle, pancreas, uterus, and small intestine. Weakly expressed in placenta and lung.

The protein localises to the secreted. Its subcellular location is the extracellular space. The protein resides in the extracellular matrix. Functionally, key regulator of transforming growth factor beta (TGFB1, TGFB2 and TGFB3) that controls TGF-beta activation by maintaining it in a latent state during storage in extracellular space. Associates specifically via disulfide bonds with the Latency-associated peptide (LAP), which is the regulatory chain of TGF-beta, and regulates integrin-dependent activation of TGF-beta. This is Latent-transforming growth factor beta-binding protein 4 (LTBP4) from Homo sapiens (Human).